The following is a 455-amino-acid chain: UDP-N-acetylmuramoylalanine--D-glutamate ligase (455 aa).

Residue 117-123 (GTNGKTT) participates in ATP binding.

Belongs to the MurCDEF family.

It is found in the cytoplasm. The enzyme catalyses UDP-N-acetyl-alpha-D-muramoyl-L-alanine + D-glutamate + ATP = UDP-N-acetyl-alpha-D-muramoyl-L-alanyl-D-glutamate + ADP + phosphate + H(+). The protein operates within cell wall biogenesis; peptidoglycan biosynthesis. In terms of biological role, cell wall formation. Catalyzes the addition of glutamate to the nucleotide precursor UDP-N-acetylmuramoyl-L-alanine (UMA). The sequence is that of UDP-N-acetylmuramoylalanine--D-glutamate ligase from Pelotomaculum thermopropionicum (strain DSM 13744 / JCM 10971 / SI).